A 578-amino-acid polypeptide reads, in one-letter code: NADPH oxidase 4 (578 aa).

The Cytoplasmic segment spans residues 1–16 (MAVSWRSWLANEGVKH). Residues 17–37 (LCLLIWLSLNVLLFWKTFLLY) form a helical membrane-spanning segment. Residues 38–62 (NQGPEYYYIHQMLGLGLCLSRASAS) are Extracellular-facing. The Ferric oxidoreductase domain occupies 58 to 303 (RASASVLNLN…YCAERLYRCI (246 aa)). A helical membrane pass occupies residues 63-83 (VLNLNCSLILLPMCRTVLAYL). Residues 84–104 (RGSQKVPSRRTRRLLDKSKTL) lie on the Cytoplasmic side of the membrane. A helical transmembrane segment spans residues 105-125 (HITCGVTICIFSGVHVAAHLV). The Extracellular portion of the chain corresponds to 126-154 (NALNFSVNYSEDFLELNAARYQNEDPRKL). N133 carries an N-linked (GlcNAc...) asparagine glycan. A helical transmembrane segment spans residues 155–175 (LFTTIPGLTGVCMVVVLFLMV). The Cytoplasmic portion of the chain corresponds to 176–188 (TASTYAIRVSNYD). A helical membrane pass occupies residues 189-209 (IFWYTHNLFFVFYMLLLLHVS). Residues 210 to 424 (GGLLKYQTNV…SPFEESLNYE (215 aa)) are Extracellular-facing. Residues 218-273 (NVDTHPPGCISLNQTSSQNMSIPDYVSEHFHGSLPRGFSKLEDRYQKTLVKICLEE) form an E-loop; essential for H2O2 generating catalytic activity region. The N-linked (GlcNAc...) asparagine glycan is linked to N230. The tract at residues 248-575 (HGSLPRGFSK…YGTKFEYNKE (328 aa)) is mediates interaction with TLR4. An FAD-binding FR-type domain is found at 304 to 419 (RSNKPVTIIS…DGPFGSPFEE (116 aa)). A helical transmembrane segment spans residues 425–445 (VSLCVAGGIGVTPFASILNTL). Topologically, residues 446-578 (LDDWKPYKLR…KFEYNKESFS (133 aa)) are cytoplasmic.

In terms of assembly, interacts with, relocalizes and stabilizes CYBA/p22phox. Interacts with TLR4. Interacts with protein disulfide isomerase. Interacts with PPP1R15A. Interacts with LRRC8A; this interaction prevents the ubiquitin-mediated degradation of LRRC8A. Heme is required as a cofactor. Post-translationally, N-glycosylation is required for the function. EXpressed in brain, in all layers of the cerebellum, in pyramidal cells of the Ammon horn and in Purkinje cells (at protein level). Expressed in osteoclasts, leukocytes, kidney, liver and lung.

It is found in the cytoplasm. Its subcellular location is the endoplasmic reticulum membrane. The protein localises to the cell membrane. It localises to the cell junction. The protein resides in the focal adhesion. It is found in the nucleus. The catalysed reaction is NADPH + 2 O2 = 2 superoxide + NADP(+) + H(+). It catalyses the reaction NADPH + O2 + H(+) = H2O2 + NADP(+). Activated by insulin. Inhibited by diphenylene iodonium. Inhibited by plumbagin. Activated by phorbol 12-myristate 13-acetate (PMA). NADPH oxidase that catalyzes predominantly the reduction of oxygen to H2O2. Can also catalyze to a smaller extent, the reduction of oxygen to superoxide. May function as an oxygen sensor regulating the KCNK3/TASK-1 potassium channel and HIF1A activity. May regulate insulin signaling cascade. May play a role in apoptosis, bone resorption and lipolysaccharide-mediated activation of NFKB. May produce superoxide in the nucleus and play a role in regulating gene expression upon cell stimulation. Promotes ferroptosis, reactive oxygen species production and reduced glutathione (GSH) levels by activating NLRP3 inflammasome activation and cytokine release. The protein is NADPH oxidase 4 (Nox4) of Mus musculus (Mouse).